The chain runs to 342 residues: Probable dual-specificity RNA methyltransferase RlmN (342 aa).

Glutamate 91 acts as the Proton acceptor in catalysis. In terms of domain architecture, Radical SAM core spans 97-326 (YRFGNTACVS…CTVRRELGSD (230 aa)). A disulfide bridge connects residues cysteine 104 and cysteine 331. Residues cysteine 111, cysteine 115, and cysteine 118 each contribute to the [4Fe-4S] cluster site. S-adenosyl-L-methionine-binding positions include 157–158 (GE), serine 189, 212–214 (SLH), and asparagine 288. Residue cysteine 331 is the S-methylcysteine intermediate of the active site.

It belongs to the radical SAM superfamily. RlmN family. It depends on [4Fe-4S] cluster as a cofactor.

Its subcellular location is the cytoplasm. The enzyme catalyses adenosine(2503) in 23S rRNA + 2 reduced [2Fe-2S]-[ferredoxin] + 2 S-adenosyl-L-methionine = 2-methyladenosine(2503) in 23S rRNA + 5'-deoxyadenosine + L-methionine + 2 oxidized [2Fe-2S]-[ferredoxin] + S-adenosyl-L-homocysteine. It catalyses the reaction adenosine(37) in tRNA + 2 reduced [2Fe-2S]-[ferredoxin] + 2 S-adenosyl-L-methionine = 2-methyladenosine(37) in tRNA + 5'-deoxyadenosine + L-methionine + 2 oxidized [2Fe-2S]-[ferredoxin] + S-adenosyl-L-homocysteine. Specifically methylates position 2 of adenine 2503 in 23S rRNA and position 2 of adenine 37 in tRNAs. This Thermoanaerobacter pseudethanolicus (strain ATCC 33223 / 39E) (Clostridium thermohydrosulfuricum) protein is Probable dual-specificity RNA methyltransferase RlmN.